We begin with the raw amino-acid sequence, 370 residues long: Leucine-rich repeat-containing protein 19 (370 aa).

Positions 1 to 24 (MKVTGITILFWPLSMILLSDKIQS) are cleaved as a signal peptide. Residues 25-270 (SKREVQCNFT…SEHEPLGKSW (246 aa)) lie on the Extracellular side of the membrane. 4 N-linked (GlcNAc...) asparagine glycosylation sites follow: asparagine 32, asparagine 37, asparagine 62, and asparagine 95. LRR repeat units lie at residues 46-71 (KKDV…VLQT), 72-95 (YFLL…GFGN), 96-119 (LSSL…AFLG), 120-143 (LNKL…VFVP), and 145-168 (RSLK…LFHL). An LRRCT domain is found at 176–227 (NLWNCSCSLFNLQNWLNTSNVTLENENITMCSYPNSLQSYNIKTVPHKAECH). Asparagine 179, asparagine 192, asparagine 195, asparagine 202, asparagine 251, and asparagine 256 each carry an N-linked (GlcNAc...) asparagine glycan. The helical transmembrane segment at 271–291 (AFLVGVVVTVLTTSLLIFIAI) threads the bilayer. The Cytoplasmic segment spans residues 292 to 370 (KCPIWYNILL…IDIHELCEEN (79 aa)).

In terms of assembly, interacts with TRAF2 and TRAF6. Expressed in renal collecting duct epithelial cells.

It localises to the membrane. Its activity is regulated as follows. Activated by TLR ligands such as LPS, bacterial DNA and peptidoglycan. Pathogen-recognition receptor which mediates the activation of TRAF2- and TRAF6 NF-kappa-B signaling pathways and induces the expression of pro-inflammatory cytokines. In kidney, prevents infection by uropathogenic bacteria by inducing the production of cytokines, chemokines and antimicrobial substances. In gut, involved in host-microbiota interactions, plays a critical role in promoting the recruitment of immune cells and intestinal inflammation. This Homo sapiens (Human) protein is Leucine-rich repeat-containing protein 19.